The chain runs to 347 residues: Heat-inducible transcription repressor HrcA (347 aa).

Belongs to the HrcA family.

Functionally, negative regulator of class I heat shock genes (grpE-dnaK-dnaJ and groELS operons). Prevents heat-shock induction of these operons. The sequence is that of Heat-inducible transcription repressor HrcA from Laribacter hongkongensis (strain HLHK9).